The sequence spans 203 residues: Small ribosomal subunit protein uS4 (203 aa).

In terms of domain architecture, S4 RNA-binding spans 93–156 (RRLDNVVYRL…LKVPAILEAV (64 aa)).

The protein belongs to the universal ribosomal protein uS4 family. In terms of assembly, part of the 30S ribosomal subunit. Contacts protein S5. The interaction surface between S4 and S5 is involved in control of translational fidelity.

One of the primary rRNA binding proteins, it binds directly to 16S rRNA where it nucleates assembly of the body of the 30S subunit. In terms of biological role, with S5 and S12 plays an important role in translational accuracy. This chain is Small ribosomal subunit protein uS4, found in Streptococcus gordonii (strain Challis / ATCC 35105 / BCRC 15272 / CH1 / DL1 / V288).